A 495-amino-acid chain; its full sequence is Flagellin (495 aa).

This sequence belongs to the bacterial flagellin family.

The protein resides in the secreted. The protein localises to the bacterial flagellum. In terms of biological role, flagellin is the subunit protein which polymerizes to form the filaments of bacterial flagella. In Salmonella typhimurium (strain LT2 / SGSC1412 / ATCC 700720), this protein is Flagellin (fliC).